The primary structure comprises 388 residues: GTPase Obg (388 aa).

One can recognise an Obg domain in the interval Ser-4 to Leu-162. One can recognise an OBG-type G domain in the interval Ala-163–Asn-329. GTP contacts are provided by residues Gly-169–Ser-176, Phe-194–Glu-198, Asp-216–Gly-219, Thr-283–Asp-286, and Ser-310–Val-312. Mg(2+) contacts are provided by Ser-176 and Thr-196. Residues Leu-352–Lys-388 form a disordered region. Residues Gly-356–Lys-388 show a composition bias toward acidic residues.

This sequence belongs to the TRAFAC class OBG-HflX-like GTPase superfamily. OBG GTPase family. Monomer. It depends on Mg(2+) as a cofactor.

It localises to the cytoplasm. Its function is as follows. An essential GTPase which binds GTP, GDP and possibly (p)ppGpp with moderate affinity, with high nucleotide exchange rates and a fairly low GTP hydrolysis rate. Plays a role in control of the cell cycle, stress response, ribosome biogenesis and in those bacteria that undergo differentiation, in morphogenesis control. In Bacteroides thetaiotaomicron (strain ATCC 29148 / DSM 2079 / JCM 5827 / CCUG 10774 / NCTC 10582 / VPI-5482 / E50), this protein is GTPase Obg.